Here is a 235-residue protein sequence, read N- to C-terminus: Small ribosomal subunit protein uS3 (235 aa).

Residues 39-107 (VRKFLNKELA…PAQINIAEVK (69 aa)) form the KH type-2 domain. The disordered stretch occupies residues 215 to 235 (AQSEQQPADKPKKAPRGKGRK).

Belongs to the universal ribosomal protein uS3 family. Part of the 30S ribosomal subunit. Forms a tight complex with proteins S10 and S14.

In terms of biological role, binds the lower part of the 30S subunit head. Binds mRNA in the 70S ribosome, positioning it for translation. The chain is Small ribosomal subunit protein uS3 from Haemophilus influenzae (strain ATCC 51907 / DSM 11121 / KW20 / Rd).